The primary structure comprises 428 residues: PGL/p-HBAD biosynthesis glycosyltransferase MRA_2985 (428 aa).

The tract at residues 1 to 23 (MEETSVAGDPGPDAGTSTAPNAA) is disordered.

It belongs to the UDP-glycosyltransferase family.

Its function is as follows. Involved in glycosylation steps downstream of mono-O-methyl-glycosyl-p-hydroxybenzoic acid derivative (p-HBAD I) and 2-O-methyl-rhamnosyl-phenolphthiocerol dimycocerosate (mycoside B) during the p-hydroxybenzoic acid derivatives (p-HBAD) and glycosylated phenolphthiocerol dimycocerosates (PGL) biosynthesis. The sequence is that of PGL/p-HBAD biosynthesis glycosyltransferase MRA_2985 from Mycobacterium tuberculosis (strain ATCC 25177 / H37Ra).